A 445-amino-acid polypeptide reads, in one-letter code: Glutamate-1-semialdehyde 2,1-aminomutase (445 aa).

An N6-(pyridoxal phosphate)lysine modification is found at lysine 264.

It belongs to the class-III pyridoxal-phosphate-dependent aminotransferase family. HemL subfamily. Requires pyridoxal 5'-phosphate as cofactor.

It localises to the cytoplasm. It catalyses the reaction (S)-4-amino-5-oxopentanoate = 5-aminolevulinate. It participates in porphyrin-containing compound metabolism; protoporphyrin-IX biosynthesis; 5-aminolevulinate from L-glutamyl-tRNA(Glu): step 2/2. This chain is Glutamate-1-semialdehyde 2,1-aminomutase, found in Halobacterium salinarum (strain ATCC 29341 / DSM 671 / R1).